Reading from the N-terminus, the 352-residue chain is Fc receptor-like A (352 aa).

An N-terminal signal peptide occupies residues 1–30 (MKLSCTLTQWALYVCPAVLLATQMLLAASS). The interval 46–65 (CQAAAEEDEGDEDDGDMTQS) is disordered. Residues 50–61 (AEEDEGDEDDGD) are compositionally biased toward acidic residues. 2 consecutive Ig-like C2-type domains span residues 80-169 (PFHL…EAAS) and 182-260 (PVLK…RQIS). Disulfide bonds link Cys-109–Cys-153 and Cys-202–Cys-250. A disordered region spans residues 275–310 (KPTASETPPTEALGPLPPPPASSAEQPRFSSPDPHL).

As to quaternary structure, monomer or homodimer; disulfide-linked. As to expression, highly expressed in spleen. Expressed in immature B-cell and B-cell lines.

Its subcellular location is the cytoplasm. In terms of biological role, may be implicated in B-cell differentiation and lymphomagenesis. This is Fc receptor-like A (Fcrla) from Mus musculus (Mouse).